The sequence spans 337 residues: Ornithine carbamoyltransferase, catabolic (337 aa).

Residues 58–61 (STRT), Gln-85, Arg-109, and 135–138 (HPTQ) contribute to the carbamoyl phosphate site. Residues Asn-167, Asp-231, and 235 to 236 (SM) each bind L-ornithine. Residues 272 to 273 (CL) and Arg-317 contribute to the carbamoyl phosphate site.

It belongs to the aspartate/ornithine carbamoyltransferase superfamily. OTCase family.

The protein resides in the cytoplasm. It carries out the reaction carbamoyl phosphate + L-ornithine = L-citrulline + phosphate + H(+). The protein operates within amino-acid degradation; L-arginine degradation via ADI pathway; carbamoyl phosphate from L-arginine: step 2/2. Its function is as follows. Reversibly catalyzes the transfer of the carbamoyl group from carbamoyl phosphate (CP) to the N(epsilon) atom of ornithine (ORN) to produce L-citrulline. The protein is Ornithine carbamoyltransferase, catabolic (arcB) of Latilactobacillus sakei (Lactobacillus sakei).